The following is a 425-amino-acid chain: Septin-7 (425 aa).

One can recognise a Septin-type G domain in the interval 28–297 (RGFEFTLMVV…ENYRSRKLAA (270 aa)). A G1 motif region spans residues 38 to 45 (GESGLGKS). GTP contacts are provided by residues 38 to 45 (GESGLGKS), Thr-71, Gly-97, 176 to 184 (KADTLTPEE), Gly-231, and Arg-246. Residues 94 to 97 (DTPG) are G3 motif. The G4 motif stretch occupies residues 175–178 (AKAD). The stretch at 324–421 (LAQMEEERRE…SRTLEKNKKK (98 aa)) forms a coiled coil.

This sequence belongs to the TRAFAC class TrmE-Era-EngA-EngB-Septin-like GTPase superfamily. Septin GTPase family. As to quaternary structure, monomer, and homodimer. Nucleotide binding promotes oligomerization. Can form heterooligomers with other family members and form filaments.

It localises to the cytoplasm. It is found in the chromosome. Its subcellular location is the centromere. The protein resides in the kinetochore. The protein localises to the cytoskeleton. It localises to the spindle. It is found in the cleavage furrow. Its subcellular location is the midbody. The protein resides in the cilium axoneme. In terms of biological role, filament-forming cytoskeletal GTPase. Required for normal organization of the actin cytoskeleton. Required for normal progress through mitosis. Involved in cytokinesis. Plays a role in ciliogenesis and collective cell movements including convergent extension during gastrulation. Controls cell elongation but not polarization during convergent extension. This chain is Septin-7, found in Xenopus laevis (African clawed frog).